Reading from the N-terminus, the 422-residue chain is Adenylosuccinate synthetase (422 aa).

Residues 12 to 18 (GDEGKGK) and 40 to 42 (GHT) each bind GTP. The active-site Proton acceptor is Asp-13. Asp-13 and Gly-40 together coordinate Mg(2+). Residues 13-16 (DEGK), 38-41 (NAGH), Thr-129, Arg-143, Asn-221, Thr-236, and Arg-300 contribute to the IMP site. His-41 acts as the Proton donor in catalysis. 296 to 302 (VTTGRKR) is a binding site for substrate. Residues Arg-302, 328-330 (KLD), and 410-412 (GVG) contribute to the GTP site.

It belongs to the adenylosuccinate synthetase family. Homodimer. Mg(2+) serves as cofactor.

The protein localises to the cytoplasm. It carries out the reaction IMP + L-aspartate + GTP = N(6)-(1,2-dicarboxyethyl)-AMP + GDP + phosphate + 2 H(+). It functions in the pathway purine metabolism; AMP biosynthesis via de novo pathway; AMP from IMP: step 1/2. Its function is as follows. Plays an important role in the de novo pathway and in the salvage pathway of purine nucleotide biosynthesis. Catalyzes the first committed step in the biosynthesis of AMP from IMP. This chain is Adenylosuccinate synthetase, found in Pyrenophora tritici-repentis (strain Pt-1C-BFP) (Wheat tan spot fungus).